The sequence spans 282 residues: MAAKIISGTELSKQIKANLADKITHYIEQGKRVPGLAVILVGADPASQIYVGNKRKSCEEVGILSKSYDLPETTTQNELLAIIDQLNADKNIDGILVQLPLPKQINAEAIIEHIDPKKDVDGFHPYNVGRLCQRIPTLRACTPYGVMKLLETTGIDLHGKHAVIVGASNIVGRPMSLELLLAGATVTVTHRFTKNLENHVRQADILVVAVGKPNLISGDWIKESAVVIDVGINRVDGKLVGDIEFDKAAEKAAYITPVPGGVGPMTVAMLMSNTLYAYEHNK.

Residues 166–168 (GAS) and I232 each bind NADP(+).

It belongs to the tetrahydrofolate dehydrogenase/cyclohydrolase family. Homodimer.

It catalyses the reaction (6R)-5,10-methylene-5,6,7,8-tetrahydrofolate + NADP(+) = (6R)-5,10-methenyltetrahydrofolate + NADPH. The catalysed reaction is (6R)-5,10-methenyltetrahydrofolate + H2O = (6R)-10-formyltetrahydrofolate + H(+). The protein operates within one-carbon metabolism; tetrahydrofolate interconversion. Catalyzes the oxidation of 5,10-methylenetetrahydrofolate to 5,10-methenyltetrahydrofolate and then the hydrolysis of 5,10-methenyltetrahydrofolate to 10-formyltetrahydrofolate. The chain is Bifunctional protein FolD from Haemophilus influenzae (strain PittGG).